The following is a 134-amino-acid chain: ATP synthase epsilon chain (134 aa).

This sequence belongs to the ATPase epsilon chain family. As to quaternary structure, F-type ATPases have 2 components, CF(1) - the catalytic core - and CF(0) - the membrane proton channel. CF(1) has five subunits: alpha(3), beta(3), gamma(1), delta(1), epsilon(1). CF(0) has three main subunits: a, b and c.

Its subcellular location is the cellular thylakoid membrane. Produces ATP from ADP in the presence of a proton gradient across the membrane. This is ATP synthase epsilon chain from Prochlorococcus marinus (strain MIT 9301).